A 332-amino-acid chain; its full sequence is Malate dehydrogenase (332 aa).

Residue 15–21 (GAAGHIG) coordinates NAD(+). Positions 96 and 102 each coordinate substrate. Residues Asn109 and 133 to 135 (VGN) each bind NAD(+). 2 residues coordinate substrate: Asn135 and Arg166. The active-site Proton acceptor is His191.

Belongs to the LDH/MDH superfamily. MDH type 2 family.

It catalyses the reaction (S)-malate + NAD(+) = oxaloacetate + NADH + H(+). Functionally, catalyzes the reversible oxidation of malate to oxaloacetate. The sequence is that of Malate dehydrogenase from Mycolicibacterium vanbaalenii (strain DSM 7251 / JCM 13017 / BCRC 16820 / KCTC 9966 / NRRL B-24157 / PYR-1) (Mycobacterium vanbaalenii).